The chain runs to 33 residues: Thrombin-like enzyme RP34 (33 aa).

Residues Val1–Ile33 enclose the Peptidase S1 domain.

It belongs to the peptidase S1 family. Snake venom subfamily. As to quaternary structure, homodimer. Expressed by the venom gland.

It localises to the secreted. The catalysed reaction is Selective cleavage of Arg-|-Xaa bond in fibrinogen, to form fibrin, and release fibrinopeptide A. The specificity of further degradation of fibrinogen varies with species origin of the enzyme.. Thrombin-like snake venom serine protease that displays clotting activity on fibrinogen. Shows both arginine-ester hydrolase and amidase activities on synthetic substrates. Also shows proteolytic activity toward casein. This chain is Thrombin-like enzyme RP34, found in Cerastes cerastes (Horned desert viper).